A 1413-amino-acid chain; its full sequence is Sushi, nidogen and EGF-like domain-containing protein 1 (1413 aa).

The signal sequence occupies residues 1–24 (MRHGVAWALLVAAALGLGARGVRG). The NIDO domain maps to 103–258 (AFWADVDNRR…GRWAFRIDDA (156 aa)). 2 N-linked (GlcNAc...) asparagine glycosylation sites follow: asparagine 145 and asparagine 204. EGF-like domains are found at residues 268–309 (TTSV…RRCH), 311–347 (DVNE…PTCE), and 349–385 (AQSP…AACE). 18 cysteine pairs are disulfide-bonded: cysteine 272–cysteine 284, cysteine 278–cysteine 297, cysteine 299–cysteine 308, cysteine 315–cysteine 326, cysteine 320–cysteine 335, cysteine 337–cysteine 346, cysteine 353–cysteine 364, cysteine 358–cysteine 373, cysteine 375–cysteine 384, cysteine 391–cysteine 402, cysteine 396–cysteine 411, cysteine 413–cysteine 422, cysteine 433–cysteine 444, cysteine 438–cysteine 453, cysteine 455–cysteine 464, cysteine 472–cysteine 480, cysteine 474–cysteine 488, and cysteine 490–cysteine 499. Asparagine 292 is a glycosylation site (N-linked (GlcNAc...) asparagine). The Follistatin-like 1 domain maps to 352–374 (PCDTKECQHGGQCQVENGSAVCV). N-linked (GlcNAc...) asparagine glycosylation is present at asparagine 368. Positions 387–423 (DVDDCSPDPCLNGGSCVDLVGNYTCLCAEPFKGLRCE) constitute an EGF-like 4; calcium-binding domain. An N-linked (GlcNAc...) asparagine glycan is attached at asparagine 408. EGF-like domains are found at residues 429–465 (VPDA…LDCR) and 468–500 (VPDD…LLCE). Asparagine 484 is a glycosylation site (N-linked (GlcNAc...) asparagine). One can recognise a Follistatin-like 2 domain in the interval 507 to 530 (PCNMNTQCPDGGYCMEHGGSYLCV). N-linked (GlcNAc...) asparagine glycosylation is present at asparagine 536. EGF-like domains follow at residues 541 to 577 (LPSP…KHCE), 580 to 616 (RPHL…RHCE), 619 to 655 (KPDS…RHCE), and 657 to 693 (APSP…RRCQ). Intrachain disulfides connect cysteine 545-cysteine 556, cysteine 550-cysteine 565, cysteine 567-cysteine 576, cysteine 584-cysteine 595, cysteine 589-cysteine 604, cysteine 606-cysteine 615, cysteine 623-cysteine 634, cysteine 628-cysteine 643, cysteine 645-cysteine 654, cysteine 661-cysteine 672, cysteine 666-cysteine 681, cysteine 683-cysteine 692, cysteine 698-cysteine 739, cysteine 724-cysteine 751, cysteine 757-cysteine 768, cysteine 762-cysteine 777, cysteine 779-cysteine 788, cysteine 795-cysteine 806, cysteine 800-cysteine 815, cysteine 817-cysteine 826, cysteine 833-cysteine 844, cysteine 838-cysteine 853, cysteine 855-cysteine 864, cysteine 871-cysteine 882, cysteine 876-cysteine 891, and cysteine 893-cysteine 902. Positions 696–753 (VDCGPPEEVKHATLRFNGTRLGAVALYACDRGYSLSAPSRIRVCQPHGVWSEPPQCLE) constitute a Sushi domain. N-linked (GlcNAc...) asparagine glycosylation is present at asparagine 712. One can recognise an EGF-like 11; calcium-binding domain in the interval 753–789 (EIDECRSQPCLHGGSCQDRVAGYLCLCSTGYEGAHCE). In terms of domain architecture, EGF-like 12; calcium-binding spans 791–827 (ERDECRAHPCRNGGSCRNLPGAYVCRCPAGFVGVHCE). 2 EGF-like domains span residues 829–865 (EVDA…YHCE) and 867–903 (VSDP…EDCA). N-linked (GlcNAc...) asparagine glycosylation occurs at asparagine 886. 3 consecutive Fibronectin type-III domains span residues 908–1006 (PPTA…TRPR), 1007–1105 (PVEG…TRPL), and 1106–1200 (PPAN…SPRD). Asparagine 977, asparagine 1015, asparagine 1109, and asparagine 1139 each carry an N-linked (GlcNAc...) asparagine glycan. The disordered stretch occupies residues 1206–1226 (WHQGGHHPRVLKNRPPPARLP). Residues 1207-1217 (HQGGHHPRVLK) are compositionally biased toward basic residues. An EGF-like 15 domain is found at 1307–1343 (VPGNCSENPCQNGGTCVPGADAHSCDCGPGFKGRRCE). N-linked (GlcNAc...) asparagine glycosylation is present at asparagine 1310. 3 disulfide bridges follow: cysteine 1311–cysteine 1322, cysteine 1316–cysteine 1331, and cysteine 1333–cysteine 1342. The disordered stretch occupies residues 1394-1413 (TSLKKTPNRKQSKSQTLEKS).

Phosphorylated on serine and threonine residues. Post-translationally, N-glycosylated.

Its subcellular location is the secreted. It is found in the extracellular space. The protein localises to the extracellular matrix. The sequence is that of Sushi, nidogen and EGF-like domain-containing protein 1 from Homo sapiens (Human).